The chain runs to 463 residues: L-seryl-tRNA(Sec) selenium transferase (463 aa).

Lys294 is modified (N6-(pyridoxal phosphate)lysine).

This sequence belongs to the SelA family. Pyridoxal 5'-phosphate is required as a cofactor.

It localises to the cytoplasm. The enzyme catalyses L-seryl-tRNA(Sec) + selenophosphate + H(+) = L-selenocysteinyl-tRNA(Sec) + phosphate. It functions in the pathway aminoacyl-tRNA biosynthesis; selenocysteinyl-tRNA(Sec) biosynthesis; selenocysteinyl-tRNA(Sec) from L-seryl-tRNA(Sec) (bacterial route): step 1/1. In terms of biological role, converts seryl-tRNA(Sec) to selenocysteinyl-tRNA(Sec) required for selenoprotein biosynthesis. The protein is L-seryl-tRNA(Sec) selenium transferase of Hyphomonas neptunium (strain ATCC 15444).